Reading from the N-terminus, the 860-residue chain is Ubiquitin fusion degradation protein 3 homolog (860 aa).

WD repeat units follow at residues 27 to 65 (AHKSDTKALAVTQGGCLISGGRDETVKFWAKKGKQYTKT), 71 to 112 (PKGI…PYAI), 115 to 154 (EHKQNVCCLHINEKATHMLSGSWDSNVIIWPITELNSSSF), 163 to 203 (GHTL…SVFK), 204 to 242 (GHTDVVRALVVLSSSHFLSAGNDGHIIHWDVASASILRK), and 244 to 283 (ATQAHEFIYSMTLSDSHILTTGEDGTLEFWAIDGGKDGNL). One can recognise a PFU domain in the interval 397–497 (PIHYLEEITR…DKLSKGAASA (101 aa)). Residues 494-585 (AASAQSGYED…LPQNKKKPRG (92 aa)) form a disordered region. The 271-residue stretch at 586-856 (PLVPVPDFYI…KNIARDIVEM (271 aa)) folds into the PUL domain.

Belongs to the WD repeat PLAP family. In terms of assembly, interacts with cdc-48.1. As to expression, expressed in intestine (at protein level).

The protein localises to the cytoplasm. Functionally, plays a role in protein ubiquitination, sorting and degradation through its association with cdc-48.1 and/or cdc-48.2. This Caenorhabditis elegans protein is Ubiquitin fusion degradation protein 3 homolog.